Consider the following 87-residue polypeptide: Probable Fe(2+)-trafficking protein (87 aa).

This sequence belongs to the Fe(2+)-trafficking protein family. Monomer.

In terms of biological role, could be a mediator in iron transactions between iron acquisition and iron-requiring processes, such as synthesis and/or repair of Fe-S clusters in biosynthetic enzymes. This is Probable Fe(2+)-trafficking protein from Buchnera aphidicola subsp. Baizongia pistaciae (strain Bp).